Consider the following 361-residue polypeptide: Phosphoserine aminotransferase (361 aa).

Arg43 lines the L-glutamate pocket. Residues 77–78 (AS), Trp103, Thr153, Asp173, and Gln196 contribute to the pyridoxal 5'-phosphate site. Lys197 carries the N6-(pyridoxal phosphate)lysine modification. Pyridoxal 5'-phosphate is bound at residue 238–239 (NT).

It belongs to the class-V pyridoxal-phosphate-dependent aminotransferase family. SerC subfamily. In terms of assembly, homodimer. The cofactor is pyridoxal 5'-phosphate.

It localises to the cytoplasm. It catalyses the reaction O-phospho-L-serine + 2-oxoglutarate = 3-phosphooxypyruvate + L-glutamate. The enzyme catalyses 4-(phosphooxy)-L-threonine + 2-oxoglutarate = (R)-3-hydroxy-2-oxo-4-phosphooxybutanoate + L-glutamate. The protein operates within amino-acid biosynthesis; L-serine biosynthesis; L-serine from 3-phospho-D-glycerate: step 2/3. Its pathway is cofactor biosynthesis; pyridoxine 5'-phosphate biosynthesis; pyridoxine 5'-phosphate from D-erythrose 4-phosphate: step 3/5. In terms of biological role, catalyzes the reversible conversion of 3-phosphohydroxypyruvate to phosphoserine and of 3-hydroxy-2-oxo-4-phosphonooxybutanoate to phosphohydroxythreonine. The polypeptide is Phosphoserine aminotransferase (Pseudomonas aeruginosa (strain LESB58)).